A 588-amino-acid chain; its full sequence is Acid beta-fructofuranosidase 1, vacuolar (588 aa).

Topologically, residues 1 to 31 are cytoplasmic; the sequence is MDTSTSAYAPLPGEDPLFSGHPPASLRRSWK. The propeptide at 1–115 is removed in mature form; sequence MDTSTSAYAP…LSYNWTNAMF (115 aa). The chain crosses the membrane as a helical; Signal-anchor for type II membrane protein span at residues 32–52; the sequence is GFAVIFASVLFLLSLVGLIIH. Residues 53–588 lie on the Lumenal side of the membrane; it reads QGPQQPPDVM…LRALRKEVGR (536 aa). The interval 57 to 86 is disordered; sequence QPPDVMPDKQDEHHHPQSTTPASETTASWE. A compositionally biased stretch (basic and acidic residues) spans 62 to 71; it reads MPDKQDEHHH. Residues 73 to 84 show a composition bias toward polar residues; that stretch reads QSTTPASETTAS. Residues 130-133, glutamine 149, and tryptophan 157 contribute to the substrate site; that span reads WMND. Aspartate 133 is an active-site residue. Asparagine 159 carries an N-linked (GlcNAc...) asparagine glycan. A substrate-binding site is contributed by 192–193; it reads WS. N-linked (GlcNAc...) asparagine glycosylation is present at asparagine 226. Substrate-binding positions include 256–257, glutamate 311, and aspartate 344; that span reads RD. An intrachain disulfide couples cysteine 499 to cysteine 545.

It belongs to the glycosyl hydrolase 32 family. As to quaternary structure, monomer. May be present in two forms, a 70 kDa monomer and a heterodimer of the 30 kDa and 38 kDa subunits. The ratio of the levels of the two forms within cells appears to be regulated developmentally. Post-translationally, glycosylated. In terms of tissue distribution, expressed in buds, stems, roots and leaves. Expressed in the epidermal cells of young leaves and of primordial leaves.

The protein resides in the membrane. It is found in the vacuole lumen. The enzyme catalyses Hydrolysis of terminal non-reducing beta-D-fructofuranoside residues in beta-D-fructofuranosides.. In terms of biological role, acidic vacuolar invertase involved in light-induced bud burst. This is Acid beta-fructofuranosidase 1, vacuolar from Rosa hybrid cultivar.